We begin with the raw amino-acid sequence, 206 residues long: Cytochrome c biogenesis ATP-binding export protein CcmA (206 aa).

Residues 3–206 (VSVDDLCVTR…LAGASDEAFL (204 aa)) enclose the ABC transporter domain. Position 35 to 42 (35 to 42 (GPNGSGKT)) interacts with ATP.

The protein belongs to the ABC transporter superfamily. CcmA exporter (TC 3.A.1.107) family. In terms of assembly, the complex is composed of two ATP-binding proteins (CcmA) and two transmembrane proteins (CcmB).

The protein localises to the cell inner membrane. It catalyses the reaction heme b(in) + ATP + H2O = heme b(out) + ADP + phosphate + H(+). In terms of biological role, part of the ABC transporter complex CcmAB involved in the biogenesis of c-type cytochromes; once thought to export heme, this seems not to be the case, but its exact role is uncertain. Responsible for energy coupling to the transport system. The sequence is that of Cytochrome c biogenesis ATP-binding export protein CcmA from Roseobacter denitrificans (strain ATCC 33942 / OCh 114) (Erythrobacter sp. (strain OCh 114)).